Consider the following 850-residue polypeptide: MVMADTIATGDKTSQFDGKHMQDLERIYSTRDTLDDNFFGERGQKDANGDYYDELNNEETNYSGSSYYGHSDDSEVVGLIKNDTVSQLPPLDSFIFPDSRALFLLDLGNYADLTYEEIIVHGFEIYIVEQWVACRNLSTLITSYTGNSQDTISGVRVVLPKDTSMWPGRFRLYFEELMEFARPKFTPKGTLFITNLSGVSFGLNLLHVECGDLRTIWKDFEVNFDLKNLHCGGRSANLLCPPTMASLDKFSQLFKIPTNGFIAQYPQMIQQQQPRLPEEEYKTVGNSKCRNTDSKSPVVEMVTLIQISLSYFNLLSKNYQTDGLLCEDTKRAIDEWWETYGKLYLGTEKPRNECTLGPTTVAGLISLILCCYFKLMIENCISSKDPFDEAGFFQGIYNFQKKHGLNKRKSRVYLDPRTLEKLFEVTAKVSSKDIFKLKKMVTSTVQDIIGKGNPINLSHKILTTDLDTLIHNIHGGSVGLLWKGKGHPRKCCTDISNEEFLKFNYQRGDPDGQIREREMLLEKFRLERIAYAQKHASKKVSSSSLDTSEDIGRTNAMPSSATVSSMFPNYDNTKYAYNFGINKLYQGEYYRRNSFPYCKDRTHDNIYEDLSELKEKSSRLYRCNSSSAVQNIVEKWDLPFDPSVVRIARDLLRMKYDIQAQQHIQEMDEHYMGKLNKEGTVGQYSKFNERYKRLQELYKKYSDGAKVFEGRFEDIDNKQQLLLHEMQELNSLSSRLKYDMRILEVRVRDIESSVAQFDSKLIGLKSSLQGQGKTGICSAIDPKSDKDEYDRCVNDLMTTNNPTYEALCLKMLSRRYFKDLKNDTVGWFRWLFGNNSLHNNASEDDRGIRV.

2 positions are modified to phosphoserine: Ser-594 and Ser-625.

To yeast STB6. As to quaternary structure, interacts with SIN3.

This is Protein STB2 (STB2) from Saccharomyces cerevisiae (strain ATCC 204508 / S288c) (Baker's yeast).